Here is a 127-residue protein sequence, read N- to C-terminus: Protein translocase subunit SecE (127 aa).

Helical transmembrane passes span V17 to Y37, L41 to Y61, and F95 to I115.

This sequence belongs to the SecE/SEC61-gamma family. As to quaternary structure, component of the Sec protein translocase complex. Heterotrimer consisting of SecY, SecE and SecG subunits. The heterotrimers can form oligomers, although 1 heterotrimer is thought to be able to translocate proteins. Interacts with the ribosome. Interacts with SecDF, and other proteins may be involved. Interacts with SecA.

The protein localises to the cell inner membrane. In terms of biological role, essential subunit of the Sec protein translocation channel SecYEG. Clamps together the 2 halves of SecY. May contact the channel plug during translocation. In Buchnera aphidicola subsp. Acyrthosiphon pisum (strain APS) (Acyrthosiphon pisum symbiotic bacterium), this protein is Protein translocase subunit SecE.